Consider the following 209-residue polypeptide: Redox-sensing transcriptional repressor Rex (209 aa).

The H-T-H motif DNA-binding region spans 16–55 (LYYRFIQNLSLSGKQRVSSAELSEAVKVDSATIRRDFSYF). NAD(+) is bound at residue 90–95 (GVGNLG).

It belongs to the transcriptional regulatory Rex family. In terms of assembly, homodimer.

It localises to the cytoplasm. Its function is as follows. Modulates transcription in response to changes in cellular NADH/NAD(+) redox state. In Bacillus cereus (strain G9842), this protein is Redox-sensing transcriptional repressor Rex.